The following is a 187-amino-acid chain: Elongation factor P (187 aa).

Belongs to the elongation factor P family.

Its subcellular location is the cytoplasm. The protein operates within protein biosynthesis; polypeptide chain elongation. Involved in peptide bond synthesis. Stimulates efficient translation and peptide-bond synthesis on native or reconstituted 70S ribosomes in vitro. Probably functions indirectly by altering the affinity of the ribosome for aminoacyl-tRNA, thus increasing their reactivity as acceptors for peptidyl transferase. This chain is Elongation factor P, found in Paenarthrobacter aurescens (strain TC1).